Here is a 116-residue protein sequence, read N- to C-terminus: MTPLLTLILVVLMGLPLAQALDCHVCAYNGDNCFNPMRCPAMVAYCMTTRTYYTPTRMKVSKSCVPRCFETVYDGYSKHASTTSCCQYDLCNGTGLATPATLALAPILLATLWGLL.

The N-terminal stretch at 1–20 (MTPLLTLILVVLMGLPLAQA) is a signal peptide. Residues 21–107 (LDCHVCAYNG…TPATLALAPI (87 aa)) form the UPAR/Ly6 domain. Intrachain disulfides connect cysteine 23/cysteine 46, cysteine 26/cysteine 33, cysteine 39/cysteine 64, cysteine 68/cysteine 85, and cysteine 86/cysteine 91. Cysteine 91 carries GPI-anchor amidated cysteine lipidation. Positions 92 to 116 (NGTGLATPATLALAPILLATLWGLL) are cleaved as a propeptide — removed in mature form.

As to quaternary structure, interacts with nAChRs containing alpha-4:beta-2 (CHRNA4:CHRNB2) and alpha-7 (CHRNA7) subunits. Interacts with CHRNA4 probably in the endoplasmic reticulum prior to nAChR pentameric assembly. Interacts with KCNA2/Potassium voltage-gated channel subfamily A member 2.

Its subcellular location is the cell membrane. It is found in the cell projection. The protein resides in the dendrite. It localises to the endoplasmic reticulum. In terms of biological role, acts in different tissues through interaction to nicotinic acetylcholine receptors (nAChRs). The proposed role as modulator of nAChR activity seems to be dependent on the nAChR subtype and stoichiometry, and to involve an effect on nAChR trafficking and its cell surface expression, and on single channel properties of the nAChR inserted in the plasma membrane. Modulates functional properties of nicotinic acetylcholine receptors (nAChRs) to prevent excessive excitation, and hence neurodegeneration. Enhances desensitization by increasing both the rate and extent of desensitization of alpha-4:beta-2-containing nAChRs and slowing recovery from desensitization. Promotes large amplitude ACh-evoked currents through alpha-4:beta-2 nAChRs. Is involved in regulation of the nAChR pentameric assembly in the endoplasmic reticulum. Shifts stoichiometry from high sensitivity alpha-4(2):beta-2(3) to low sensitivity alpha-4(3):beta-2(2) nAChR. In vitro modulates alpha-3:beta-4-containing nAChRs. Reduces cell surface expression of (alpha-3:beta-4)(2):beta-4 and (alpha-3:beta-4)(2):alpha-5 nAChRs suggesting an interaction with nAChR alpha-3(-):(+)beta-4 subunit interfaces and an allosteric mode. Corresponding single channel effects characterized by decreased unitary conductance, altered burst proportions and enhanced desensitization/inactivation seem to depend on nAChR alpha:alpha subunit interfaces and are greater in (alpha-3:beta-2)(2):alpha-3 when compared to (alpha-3:beta-2)(2):alpha-5 nAChRs. Prevents plasticity in the primary visual cortex late in life. The chain is Ly-6/neurotoxin-like protein 1 from Homo sapiens (Human).